A 278-amino-acid polypeptide reads, in one-letter code: HAUS augmin-like complex subunit 1 (278 aa).

Coiled coils occupy residues 53-81, 124-152, and 183-277; these read LVTE…ESVN, SDLF…ATLV, and DFLK…NMME.

It belongs to the HAUS1 family. Component of the HAUS augmin-like complex. The complex interacts with the gamma-tubulin ring complex and this interaction is required for spindle assembly. Associates with microtubules. The interaction with microtubules is strong during mitosis, while it is weak or absent during interphase. It is unclear whether this interaction is direct or indirect. Interacts with EML3 (phosphorylated form).

The protein resides in the cytoplasm. Its subcellular location is the cytoskeleton. It localises to the microtubule organizing center. It is found in the centrosome. The protein localises to the spindle. The protein resides in the spindle pole. Functionally, contributes to mitotic spindle assembly, maintenance of centrosome integrity and completion of cytokinesis as part of the HAUS augmin-like complex. This chain is HAUS augmin-like complex subunit 1 (HAUS1), found in Bos taurus (Bovine).